We begin with the raw amino-acid sequence, 55 residues long: Large ribosomal subunit protein bL33 (55 aa).

Belongs to the bacterial ribosomal protein bL33 family.

This is Large ribosomal subunit protein bL33 from Pectobacterium carotovorum subsp. carotovorum (strain PC1).